Reading from the N-terminus, the 54-residue chain is Ovomucoid (54 aa).

The 51-residue stretch at 4 to 54 (VDCSDYPKPVCTLEDMPLCGSDNITYHNKCYFCNAVAHSNGTLTFSHFGKC) folds into the Kazal-like domain. 3 disulfides stabilise this stretch: Cys6-Cys36, Cys14-Cys33, and Cys22-Cys54. N-linked (GlcNAc...) asparagine glycosylation occurs at Asn43.

Its subcellular location is the secreted. This chain is Ovomucoid, found in Carpococcyx renauldi (Coral-billed ground-cuckoo).